Consider the following 140-residue polypeptide: Large ribosomal subunit protein uL11 (140 aa).

This sequence belongs to the universal ribosomal protein uL11 family. Part of the ribosomal stalk of the 50S ribosomal subunit. Interacts with L10 and the large rRNA to form the base of the stalk. L10 forms an elongated spine to which L12 dimers bind in a sequential fashion forming a multimeric L10(L12)X complex. In terms of processing, one or more lysine residues are methylated.

Forms part of the ribosomal stalk which helps the ribosome interact with GTP-bound translation factors. The polypeptide is Large ribosomal subunit protein uL11 (Thermoanaerobacter pseudethanolicus (strain ATCC 33223 / 39E) (Clostridium thermohydrosulfuricum)).